The following is a 156-amino-acid chain: Beta-defensin 125 (156 aa).

The signal sequence occupies residues Met1 to Gly20. Disulfide bonds link Cys27-Cys55, Cys35-Cys49, and Cys39-Cys56. A propeptide spanning residues Pro68–Asn156 is cleaved from the precursor. A disordered region spans residues Gly108–Asn156. Residues Glu109 to Thr144 are compositionally biased toward low complexity.

This sequence belongs to the beta-defensin family.

It localises to the secreted. In terms of biological role, has antibacterial activity. The sequence is that of Beta-defensin 125 (DEFB125) from Homo sapiens (Human).